The primary structure comprises 335 residues: Anthranilate phosphoribosyltransferase (335 aa).

5-phospho-alpha-D-ribose 1-diphosphate contacts are provided by residues Gly-79, 82–83 (GD), Thr-87, 89–92 (NIST), 107–115 (KHGSRSVSS), and Ser-119. Gly-79 serves as a coordination point for anthranilate. Residue Ser-91 participates in Mg(2+) binding. Position 165 (Arg-165) interacts with anthranilate. 2 residues coordinate Mg(2+): Asp-223 and Glu-224.

It belongs to the anthranilate phosphoribosyltransferase family. Homodimer. The cofactor is Mg(2+).

The catalysed reaction is N-(5-phospho-beta-D-ribosyl)anthranilate + diphosphate = 5-phospho-alpha-D-ribose 1-diphosphate + anthranilate. Its pathway is amino-acid biosynthesis; L-tryptophan biosynthesis; L-tryptophan from chorismate: step 2/5. In terms of biological role, catalyzes the transfer of the phosphoribosyl group of 5-phosphorylribose-1-pyrophosphate (PRPP) to anthranilate to yield N-(5'-phosphoribosyl)-anthranilate (PRA). This chain is Anthranilate phosphoribosyltransferase, found in Helicobacter pylori (strain Shi470).